Consider the following 169-residue polypeptide: NADH-quinone oxidoreductase subunit B (169 aa).

Residues Cys42, Cys43, Cys107, and Cys136 each coordinate [4Fe-4S] cluster.

This sequence belongs to the complex I 20 kDa subunit family. NDH-1 is composed of 14 different subunits. Subunits NuoB, C, D, E, F, and G constitute the peripheral sector of the complex. The cofactor is [4Fe-4S] cluster.

The protein resides in the cell inner membrane. The enzyme catalyses a quinone + NADH + 5 H(+)(in) = a quinol + NAD(+) + 4 H(+)(out). NDH-1 shuttles electrons from NADH, via FMN and iron-sulfur (Fe-S) centers, to quinones in the respiratory chain. The immediate electron acceptor for the enzyme in this species is believed to be ubiquinone. Couples the redox reaction to proton translocation (for every two electrons transferred, four hydrogen ions are translocated across the cytoplasmic membrane), and thus conserves the redox energy in a proton gradient. The chain is NADH-quinone oxidoreductase subunit B from Wolinella succinogenes (strain ATCC 29543 / DSM 1740 / CCUG 13145 / JCM 31913 / LMG 7466 / NCTC 11488 / FDC 602W) (Vibrio succinogenes).